The following is a 95-amino-acid chain: Aspartyl/glutamyl-tRNA(Asn/Gln) amidotransferase subunit C (95 aa).

The protein belongs to the GatC family. In terms of assembly, heterotrimer of A, B and C subunits.

It carries out the reaction L-glutamyl-tRNA(Gln) + L-glutamine + ATP + H2O = L-glutaminyl-tRNA(Gln) + L-glutamate + ADP + phosphate + H(+). The catalysed reaction is L-aspartyl-tRNA(Asn) + L-glutamine + ATP + H2O = L-asparaginyl-tRNA(Asn) + L-glutamate + ADP + phosphate + 2 H(+). In terms of biological role, allows the formation of correctly charged Asn-tRNA(Asn) or Gln-tRNA(Gln) through the transamidation of misacylated Asp-tRNA(Asn) or Glu-tRNA(Gln) in organisms which lack either or both of asparaginyl-tRNA or glutaminyl-tRNA synthetases. The reaction takes place in the presence of glutamine and ATP through an activated phospho-Asp-tRNA(Asn) or phospho-Glu-tRNA(Gln). The chain is Aspartyl/glutamyl-tRNA(Asn/Gln) amidotransferase subunit C from Pelodictyon phaeoclathratiforme (strain DSM 5477 / BU-1).